A 400-amino-acid polypeptide reads, in one-letter code: MTQFASPVLHSLLDTDAYKLHMQQAVFHHYHDVHVAAEFRCRGDDLLGIYADAIREQVHAMQHLRLQEEEFQWLTGLPFFKPDYLNWLRDFRYNPEQVSVTNDNGKLNIRLTGPWLEVIMWEVPLLAVISELVHHYRSPEASVQLAMNTLEQKLADFTTLTAGLDMSRFHLMDFGTRRRFSRDVQEAIVKRLQQESWFVGTSNYDLARRLSLTPMGTQAHEWFQAHQQISPDLATSQRAALAAWLEEYPDQLGIALTDCITMDAFLRDFGVEFASRYQGLRHDSGDPVEWGEKAIAHYLKLGIDPQSKVLVFSDNLDLTKAIELYRHFSSRIKLSFGIGTRLTCDIPQVKPLNIVIKLVECNGKPVAKLSDSPGKTICHDKAFVRALRKAFDLPQIKKAS.

His-220 is subject to Phosphohistidine; by autocatalysis.

The protein belongs to the NAPRTase family. Transiently phosphorylated on a His residue during the reaction cycle. Phosphorylation strongly increases the affinity for substrates and increases the rate of nicotinate D-ribonucleotide production. Dephosphorylation regenerates the low-affinity form of the enzyme, leading to product release.

It catalyses the reaction nicotinate + 5-phospho-alpha-D-ribose 1-diphosphate + ATP + H2O = nicotinate beta-D-ribonucleotide + ADP + phosphate + diphosphate. It functions in the pathway cofactor biosynthesis; NAD(+) biosynthesis; nicotinate D-ribonucleotide from nicotinate: step 1/1. Functionally, catalyzes the synthesis of beta-nicotinate D-ribonucleotide from nicotinate and 5-phospho-D-ribose 1-phosphate at the expense of ATP. This is Nicotinate phosphoribosyltransferase from Escherichia fergusonii (strain ATCC 35469 / DSM 13698 / CCUG 18766 / IAM 14443 / JCM 21226 / LMG 7866 / NBRC 102419 / NCTC 12128 / CDC 0568-73).